Reading from the N-terminus, the 372-residue chain is Alanine racemase (372 aa).

Lys35 (proton acceptor; specific for D-alanine) is an active-site residue. At Lys35 the chain carries N6-(pyridoxal phosphate)lysine. Substrate is bound at residue Arg143. Tyr268 functions as the Proton acceptor; specific for L-alanine in the catalytic mechanism. Met316 contacts substrate.

This sequence belongs to the alanine racemase family. Requires pyridoxal 5'-phosphate as cofactor.

The catalysed reaction is L-alanine = D-alanine. Its pathway is amino-acid biosynthesis; D-alanine biosynthesis; D-alanine from L-alanine: step 1/1. Its function is as follows. Catalyzes the interconversion of L-alanine and D-alanine. May also act on other amino acids. This chain is Alanine racemase (alr), found in Shewanella frigidimarina (strain NCIMB 400).